We begin with the raw amino-acid sequence, 189 residues long: Movement protein p22 (189 aa).

The protein belongs to the tombusvirus/aureusvirus movement protein p22 family. Interacts with host protein HFI22. Phosphorylated.

It localises to the host membrane. Functionally, cell-to-cell movement. Displays RNA-binding activity. In Capsicum annuum (Capsicum pepper), this protein is Movement protein p22.